We begin with the raw amino-acid sequence, 495 residues long: Cytochrome P450 monooxygenase 113 (495 aa).

The helical transmembrane segment at Phe2–Leu22 threads the bilayer. Residue Cys428 participates in heme binding.

This sequence belongs to the cytochrome P450 family. Heme serves as cofactor.

Its subcellular location is the membrane. It participates in secondary metabolite biosynthesis. Cytochrome P450 monooxygenase that is able to use 4-ethoxybenzoic acid as a substrate for oxidation. The polypeptide is Cytochrome P450 monooxygenase 113 (Postia placenta (strain ATCC 44394 / Madison 698-R) (Brown rot fungus)).